The primary structure comprises 346 residues: Tryptophan--tRNA ligase (346 aa).

Residues 10-12 (QAS) and 18-19 (GN) each bind ATP. The 'HIGH' region signature appears at 11–19 (ASGKQHLGN). Asp-140 is an L-tryptophan binding site. ATP contacts are provided by residues 152–154 (GND), Ile-191, and 200–204 (KMSKS). Positions 200-204 (KMSKS) match the 'KMSKS' region motif.

This sequence belongs to the class-I aminoacyl-tRNA synthetase family. Homodimer.

It is found in the cytoplasm. The enzyme catalyses tRNA(Trp) + L-tryptophan + ATP = L-tryptophyl-tRNA(Trp) + AMP + diphosphate + H(+). In terms of biological role, catalyzes the attachment of tryptophan to tRNA(Trp). The sequence is that of Tryptophan--tRNA ligase from Mycoplasma pneumoniae (strain ATCC 29342 / M129 / Subtype 1) (Mycoplasmoides pneumoniae).